A 189-amino-acid chain; its full sequence is Protein YOP1 (189 aa).

Residues 1-35 (MSQIIDQVQAALQNIDKELEKYPALKELEKQIPVP) are Cytoplasmic-facing. A helical transmembrane segment spans residues 36–55 (KSYILLGFVGFYFILIFLNI). At 56–57 (GG) the chain is on the lumenal side. A helical membrane pass occupies residues 58–78 (IGQLLSNIAGLVIPGYYSLLA). Topologically, residues 79-88 (LETPGKADDT) are cytoplasmic. Residues 89–105 (QYLTYWVVFATLNVFEF) form a helical membrane-spanning segment. Topologically, residues 106 to 108 (WSK) are lumenal. The helical transmembrane segment at 109–127 (AILYWVPFYYLFKTAFLLY) threads the bilayer. At 128-189 (IGLPQYGGAE…PQGHSTGVSH (62 aa)) the chain is on the cytoplasmic side.

It belongs to the DP1 family. In terms of assembly, oligomer.

It is found in the endoplasmic reticulum membrane. The protein resides in the golgi apparatus membrane. In terms of biological role, required to generate and maintain the structure of the tubular endoplasmic reticulum network and the vacuole. Induces high curvature in membranes and causes membrane tubule formation. Involved in membrane/vesicle trafficking. This Yarrowia lipolytica (strain CLIB 122 / E 150) (Yeast) protein is Protein YOP1 (YOP1).